The following is a 307-amino-acid chain: Porphobilinogen deaminase (307 aa).

An S-(dipyrrolylmethanemethyl)cysteine modification is found at Cys-241.

It belongs to the HMBS family. As to quaternary structure, monomer. Dipyrromethane is required as a cofactor.

It carries out the reaction 4 porphobilinogen + H2O = hydroxymethylbilane + 4 NH4(+). The protein operates within porphyrin-containing compound metabolism; protoporphyrin-IX biosynthesis; coproporphyrinogen-III from 5-aminolevulinate: step 2/4. Functionally, tetrapolymerization of the monopyrrole PBG into the hydroxymethylbilane pre-uroporphyrinogen in several discrete steps. This Macrococcus caseolyticus (strain JCSC5402) (Macrococcoides caseolyticum) protein is Porphobilinogen deaminase.